The chain runs to 606 residues: MDSQRELAEELRLYQSTLLQDGLKDLLEEKKFIDCTLKAGDKSFPCHRLILSACSPYFREYFLSEIEEEKKKEMALDNVDPAILDLIIKYLYSASIDLNDGNVQDIFALSSRFQIPSVFTVCVSYLQKRLAPGNCLAILRLGLLLDCPRLAISAREFVSDRFVQICKEEDFMQLSPQELISVISNDSLNVEKEEVVFEAVMKWVRTDKENRAKNLSEVFDCIRFRLMAEKYFKDHVEKDDIIKSNPEVQKKIKVLKDAFAGKLPEPSKSAEKGGTGEVNGDVGDEDLLPGYLNDIPRHGMFVKDLILLVNDTAAVAYDPMENECYLTALAEQIPRNHSSIVTQQNQVYVVGGLYVDEENKDQPLQSYFFQLDNVSSEWVGLPPLPSARCLFGLGEVDDKIYVVAGKDLQTEASLDSVLCYDPVAAKWSEVKNLPIKVYGHNVISHNGMIYCLGGKTDDKKCTNRVFIYNPKKGDWKDLAPMKTPRSMFGVAIHKGKIVIAGGVTEDGLSASVEAFDLKTNKWEVMTEFPQERSSISLVSLAGSLYAIGGFAMIQLESKEFAPTEVNDIWKYEDDKKEWAGMLKEIRYASGASCLATRLNLFKLSKL.

Phosphoserine is present on S3. Positions 33–100 (IDCTLKAGDK…LYSASIDLND (68 aa)) constitute a BTB domain. Residues 135 to 237 (CLAILRLGLL…AEKYFKDHVE (103 aa)) form the BACK domain. Kelch repeat units lie at residues 346 to 398 (QVYV…EVDD), 399 to 447 (KIYV…SHNG), 448 to 495 (MIYC…IHKG), 497 to 542 (IVIA…SLAG), and 544 to 599 (LYAI…TRLN).

As to quaternary structure, interacts with NRAP. Part of a complex that contains CUL3, RBX1 and KLHL41. Interacts with LASP1. Post-translationally, ubiquitinated by E3 ubiquitin ligase complex formed by CUL3 and RBX1 and probably targeted for proteasome-independent degradation. Quinone-induced oxidative stress increases its ubiquitination. In terms of tissue distribution, primarily expressed in skeletal muscle. Also found in heart and lung.

Its subcellular location is the cytoplasm. It localises to the cytoskeleton. The protein resides in the cell projection. The protein localises to the pseudopodium. It is found in the ruffle. Its subcellular location is the myofibril. It localises to the sarcomere. The protein resides in the m line. The protein localises to the sarcoplasmic reticulum membrane. It is found in the endoplasmic reticulum membrane. Functionally, involved in skeletal muscle development and differentiation. Regulates proliferation and differentiation of myoblasts and plays a role in myofibril assembly by promoting lateral fusion of adjacent thin fibrils into mature, wide myofibrils. Required for pseudopod elongation in transformed cells. This is Kelch-like protein 41 (Klhl41) from Rattus norvegicus (Rat).